The following is a 208-amino-acid chain: Cysteine-rich protein 2 (208 aa).

The 53-residue stretch at 5–57 (CPKCDKTVYFAEKVSSLGKDWHKFCLKCERCNKTLTPGGHAEHDGKPFCHKPC) folds into the LIM zinc-binding 1 domain. Lys-23 carries the N6-acetyllysine modification. Ser-104 is modified (phosphoserine). The LIM zinc-binding 2 domain maps to 126-178 (CPRCNKRVYFAEKVTSLGKDWHRPCLRCERCSKTLTPGGHAEHDGQPYCHKPC). N6-acetyllysine occurs at positions 138 and 144.

In terms of assembly, interacts with TGFB1I1.

This chain is Cysteine-rich protein 2 (Crip2), found in Mus musculus (Mouse).